The primary structure comprises 273 residues: Ribosomal RNA small subunit methyltransferase A (273 aa).

N19, L21, G46, E67, D92, and N113 together coordinate S-adenosyl-L-methionine.

The protein belongs to the class I-like SAM-binding methyltransferase superfamily. rRNA adenine N(6)-methyltransferase family. RsmA subfamily.

Its subcellular location is the cytoplasm. The catalysed reaction is adenosine(1518)/adenosine(1519) in 16S rRNA + 4 S-adenosyl-L-methionine = N(6)-dimethyladenosine(1518)/N(6)-dimethyladenosine(1519) in 16S rRNA + 4 S-adenosyl-L-homocysteine + 4 H(+). Functionally, specifically dimethylates two adjacent adenosines (A1518 and A1519) in the loop of a conserved hairpin near the 3'-end of 16S rRNA in the 30S particle. May play a critical role in biogenesis of 30S subunits. In Hahella chejuensis (strain KCTC 2396), this protein is Ribosomal RNA small subunit methyltransferase A.